A 489-amino-acid chain; its full sequence is Probable cytosol aminopeptidase (489 aa).

Lysine 255 and aspartate 260 together coordinate Mn(2+). Lysine 267 is a catalytic residue. Positions 279, 339, and 341 each coordinate Mn(2+). Residue arginine 343 is part of the active site.

It belongs to the peptidase M17 family. The cofactor is Mn(2+).

The protein localises to the cytoplasm. The catalysed reaction is Release of an N-terminal amino acid, Xaa-|-Yaa-, in which Xaa is preferably Leu, but may be other amino acids including Pro although not Arg or Lys, and Yaa may be Pro. Amino acid amides and methyl esters are also readily hydrolyzed, but rates on arylamides are exceedingly low.. The enzyme catalyses Release of an N-terminal amino acid, preferentially leucine, but not glutamic or aspartic acids.. Presumably involved in the processing and regular turnover of intracellular proteins. Catalyzes the removal of unsubstituted N-terminal amino acids from various peptides. The chain is Probable cytosol aminopeptidase from Synechococcus sp. (strain CC9605).